The following is a 98-amino-acid chain: Small ribosomal subunit protein bS18 (98 aa).

Belongs to the bacterial ribosomal protein bS18 family. As to quaternary structure, part of the 30S ribosomal subunit. Forms a tight heterodimer with protein bS6.

Binds as a heterodimer with protein bS6 to the central domain of the 16S rRNA, where it helps stabilize the platform of the 30S subunit. The chain is Small ribosomal subunit protein bS18 from Flavobacterium johnsoniae (strain ATCC 17061 / DSM 2064 / JCM 8514 / BCRC 14874 / CCUG 350202 / NBRC 14942 / NCIMB 11054 / UW101) (Cytophaga johnsonae).